We begin with the raw amino-acid sequence, 195 residues long: UPF0301 protein Bpro_1142 (195 aa).

This sequence belongs to the UPF0301 (AlgH) family.

This is UPF0301 protein Bpro_1142 from Polaromonas sp. (strain JS666 / ATCC BAA-500).